Consider the following 184-residue polypeptide: Ferredoxin-thioredoxin reductase subunit A2, chloroplastic (184 aa).

A chloroplast-targeting transit peptide spans 1–71 (MTNSYALSPA…SRKNPKSTIR (71 aa)).

This sequence belongs to the ferredoxin thioredoxin reductase alpha subunit family. In terms of assembly, heterodimer of subunit A (variable subunit) and subunit B (catalytic subunit). Heterodimeric FTR forms a complex with ferredoxin and thioredoxin.

Its subcellular location is the plastid. The protein localises to the chloroplast. Variable subunit of the ferredoxin-thioredoxin reductase (FTR), which catalyzes the two-electron reduction of thioredoxins by the electrons provided by reduced ferredoxin. This chain is Ferredoxin-thioredoxin reductase subunit A2, chloroplastic, found in Arabidopsis thaliana (Mouse-ear cress).